Reading from the N-terminus, the 237-residue chain is Ribosomal RNA small subunit methyltransferase G (237 aa).

S-adenosyl-L-methionine is bound by residues Gly-78, Phe-83, Ala-129 to Glu-130, and Arg-148.

The protein belongs to the methyltransferase superfamily. RNA methyltransferase RsmG family.

It is found in the cytoplasm. Functionally, specifically methylates the N7 position of a guanine in 16S rRNA. The protein is Ribosomal RNA small subunit methyltransferase G of Streptococcus pyogenes serotype M6 (strain ATCC BAA-946 / MGAS10394).